The chain runs to 260 residues: Dolichol-phosphate mannosyltransferase subunit 1 (260 aa).

The segment at methionine 1–arginine 20 is disordered. The residue at position 2 (alanine 2) is an N-acetylalanine. Residue serine 9 is modified to Phosphoserine. Proline 32, tyrosine 34, glutamate 36, isoleucine 63, aspartate 65, aspartate 118, alanine 119, aspartate 120, arginine 147, arginine 234, and lysine 240 together coordinate GDP-alpha-D-mannose. Aspartate 120 contributes to the Mg(2+) binding site. Aspartate 120 provides a ligand contact to Mn(2+).

It belongs to the glycosyltransferase 2 family. As to quaternary structure, component of the dolichol-phosphate mannose (DPM) synthase complex composed of DPM1, DPM2 and DPM3; within the complex, directly interacts with DPM3. This interaction may stabilize DPM1. Requires Mg(2+) as cofactor. The cofactor is Mn(2+). It depends on Ca(2+) as a cofactor.

The protein localises to the endoplasmic reticulum. It catalyses the reaction a di-trans,poly-cis-dolichyl phosphate + GDP-alpha-D-mannose = a di-trans,poly-cis-dolichyl beta-D-mannosyl phosphate + GDP. It participates in protein modification; protein glycosylation. In terms of biological role, transfers mannose from GDP-mannose to dolichol monophosphate to form dolichol phosphate mannose (Dol-P-Man) which is the mannosyl donor in pathways leading to N-glycosylation, glycosyl phosphatidylinositol membrane anchoring, and O-mannosylation of proteins; catalytic subunit of the dolichol-phosphate mannose (DPM) synthase complex. The chain is Dolichol-phosphate mannosyltransferase subunit 1 (DPM1) from Bos taurus (Bovine).